The sequence spans 139 residues: Large ribosomal subunit protein uL16 (139 aa).

The segment covering 1 to 20 (MLIPRRVKHRKQHHPKRRGM) has biased composition (basic residues). The interval 1 to 22 (MLIPRRVKHRKQHHPKRRGMAK) is disordered.

Belongs to the universal ribosomal protein uL16 family. As to quaternary structure, part of the 50S ribosomal subunit.

In terms of biological role, binds 23S rRNA and is also seen to make contacts with the A and possibly P site tRNAs. This Streptomyces coelicolor (strain ATCC BAA-471 / A3(2) / M145) protein is Large ribosomal subunit protein uL16.